Here is a 166-residue protein sequence, read N- to C-terminus: Coiled-coil domain-containing protein 12 (166 aa).

Met-1 bears the N-acetylmethionine mark. The interval 1-56 (MEATTAGVGRLEEEALRRKERLKALREKTGRKDKEDGEPKTKHLREEEEEGEKHRE) is disordered. A coiled-coil region spans residues 8 to 28 (VGRLEEEALRRKERLKALREK). Residues 10 to 56 (RLEEEALRRKERLKALREKTGRKDKEDGEPKTKHLREEEEEGEKHRE) show a composition bias toward basic and acidic residues. Lys-53 is modified (N6-acetyllysine). Lys-94 participates in a covalent cross-link: Glycyl lysine isopeptide (Lys-Gly) (interchain with G-Cter in SUMO2). Residues 117–144 (KRDVAKKLEKLKKRTQRAIAELIRERLK) adopt a coiled-coil conformation. The disordered stretch occupies residues 147–166 (EDSLASAVDAATEQKTCDSD). Phosphoserine is present on residues Ser-149 and Ser-165.

This is Coiled-coil domain-containing protein 12 (CCDC12) from Homo sapiens (Human).